An 86-amino-acid polypeptide reads, in one-letter code: Small ribosomal subunit protein bS16 (86 aa).

It belongs to the bacterial ribosomal protein bS16 family.

This is Small ribosomal subunit protein bS16 from Xylella fastidiosa (strain M12).